Here is a 123-residue protein sequence, read N- to C-terminus: Small ribosomal subunit protein uS12 (123 aa).

3-methylthioaspartic acid is present on D89. A disordered region spans residues 104-123 (SVGVKDRKKSRSKYGAKRPK). Residues 109-123 (DRKKSRSKYGAKRPK) show a composition bias toward basic residues.

This sequence belongs to the universal ribosomal protein uS12 family. As to quaternary structure, part of the 30S ribosomal subunit. Contacts proteins S8 and S17. May interact with IF1 in the 30S initiation complex.

With S4 and S5 plays an important role in translational accuracy. Its function is as follows. Interacts with and stabilizes bases of the 16S rRNA that are involved in tRNA selection in the A site and with the mRNA backbone. Located at the interface of the 30S and 50S subunits, it traverses the body of the 30S subunit contacting proteins on the other side and probably holding the rRNA structure together. The combined cluster of proteins S8, S12 and S17 appears to hold together the shoulder and platform of the 30S subunit. The chain is Small ribosomal subunit protein uS12 from Pelobacter propionicus (strain DSM 2379 / NBRC 103807 / OttBd1).